The primary structure comprises 367 residues: Carbamoyl phosphate synthase small chain (367 aa).

Residues 1–182 form a CPSase region; it reads MKLENKKGYL…PIFHPNTGDM (182 aa). 3 residues coordinate L-glutamine: Ser50, Gly230, and Gly232. A Glutamine amidotransferase type-1 domain is found at 182 to 367; the sequence is MIVVVDCGIK…DKFRTMVTGK (186 aa). The Nucleophile role is filled by Cys258. 5 residues coordinate L-glutamine: Leu259, Gln262, Asn300, Gly302, and Tyr303. Catalysis depends on residues His343 and Glu345.

This sequence belongs to the CarA family. Composed of two chains; the small (or glutamine) chain promotes the hydrolysis of glutamine to ammonia, which is used by the large (or ammonia) chain to synthesize carbamoyl phosphate. Tetramer of heterodimers (alpha,beta)4.

It carries out the reaction hydrogencarbonate + L-glutamine + 2 ATP + H2O = carbamoyl phosphate + L-glutamate + 2 ADP + phosphate + 2 H(+). It catalyses the reaction L-glutamine + H2O = L-glutamate + NH4(+). It participates in amino-acid biosynthesis; L-arginine biosynthesis; carbamoyl phosphate from bicarbonate: step 1/1. It functions in the pathway pyrimidine metabolism; UMP biosynthesis via de novo pathway; (S)-dihydroorotate from bicarbonate: step 1/3. Functionally, small subunit of the glutamine-dependent carbamoyl phosphate synthetase (CPSase). CPSase catalyzes the formation of carbamoyl phosphate from the ammonia moiety of glutamine, carbonate, and phosphate donated by ATP, constituting the first step of 2 biosynthetic pathways, one leading to arginine and/or urea and the other to pyrimidine nucleotides. The small subunit (glutamine amidotransferase) binds and cleaves glutamine to supply the large subunit with the substrate ammonia. The chain is Carbamoyl phosphate synthase small chain from Saccharolobus solfataricus (strain ATCC 35092 / DSM 1617 / JCM 11322 / P2) (Sulfolobus solfataricus).